Consider the following 194-residue polypeptide: MLNELILTAVAYIVGSIPTGLLLARASGVDIRATGSGNIGATNVYRTLGRTVGIATLLGDCLKGLVPVLVARKLGFADPWVAAVGLAAFLGHVYTIFLGFKGGKGVATALGVFLGVSPLSVLGALALFIGIVATTRYISLGSIIAAAAMPLFVAAVERRPLLVGMTLVIAVIVIVKHRENIRRLREGTENRFKA.

Helical transmembrane passes span 4-24 (ELILTAVAYIVGSIPTGLLLA), 80-100 (WVAAVGLAAFLGHVYTIFLGF), 112-132 (VFLGVSPLSVLGALALFIGIV), 137-157 (YISLGSIIAAAAMPLFVAAVE), and 161-181 (LLVGMTLVIAVIVIVKHRENI).

This sequence belongs to the PlsY family. In terms of assembly, probably interacts with PlsX.

The protein resides in the cell inner membrane. The catalysed reaction is an acyl phosphate + sn-glycerol 3-phosphate = a 1-acyl-sn-glycero-3-phosphate + phosphate. It participates in lipid metabolism; phospholipid metabolism. Catalyzes the transfer of an acyl group from acyl-phosphate (acyl-PO(4)) to glycerol-3-phosphate (G3P) to form lysophosphatidic acid (LPA). This enzyme utilizes acyl-phosphate as fatty acyl donor, but not acyl-CoA or acyl-ACP. In Geobacter sulfurreducens (strain ATCC 51573 / DSM 12127 / PCA), this protein is Glycerol-3-phosphate acyltransferase.